Here is a 2038-residue protein sequence, read N- to C-terminus: Fer-1-like protein 5 (2038 aa).

C2 domains are found at residues 1–100 (MLRV…MFVR), 145–265 (TQKK…TLLR), 307–424 (QNTR…QGMY), 1055–1186 (TPED…FTPL), 1225–1345 (IPCK…SLNY), 1467–1587 (PKPP…ARCG), and 1705–1853 (GPPG…KQCS). Ca(2+) is bound by residues Asp-1502, Asp-1508, Asp-1557, Phe-1558, Asp-1559, Asp-1565, Asp-1824, Ser-1827, and Asp-1830. The helical transmembrane segment at 1961 to 1981 (IICLVVTLVIGFILLNFVYSA) threads the bilayer.

This sequence belongs to the ferlin family. Interacts (via second C2 domain) with EHD1 and EHD2. The cofactor is Ca(2+). As to expression, expressed in differentiating myoblasts and myotubes.

The protein resides in the cell membrane. It is found in the membrane. Functionally, plays a role in myoblast fusion; probable mediator of endocytic recycling for membrane trafficking events during myotube formation. The chain is Fer-1-like protein 5 (Fer1l5) from Mus musculus (Mouse).